The primary structure comprises 33 residues: uncharacterized protein (33 aa).

The tract at residues Met-1–Met-24 is disordered.

This is an uncharacterized protein from Treponema pallidum (strain Nichols).